The sequence spans 451 residues: Trigger factor (451 aa).

Positions 170–256 constitute a PPIase FKBP-type domain; that stretch reads DHIATIDYCE…LTALKYKDLP (87 aa).

The protein belongs to the FKBP-type PPIase family. Tig subfamily.

The protein localises to the cytoplasm. The enzyme catalyses [protein]-peptidylproline (omega=180) = [protein]-peptidylproline (omega=0). In terms of biological role, involved in protein export. Acts as a chaperone by maintaining the newly synthesized protein in an open conformation. Functions as a peptidyl-prolyl cis-trans isomerase. This chain is Trigger factor, found in Treponema denticola (strain ATCC 35405 / DSM 14222 / CIP 103919 / JCM 8153 / KCTC 15104).